The following is a 394-amino-acid chain: Mucosal addressin cell adhesion molecule 1 (394 aa).

Positions M1–G19 are cleaved as a signal peptide. 3 Ig-like domains span residues Q20 to Y107, A108 to E225, and P256 to G345. Over Q20–S353 the chain is Extracellular. N42 carries an N-linked (GlcNAc...) asparagine glycan. 3 disulfides stabilise this stretch: C43/C89, C47/C93, and C130/C198. Residues Q219–L255 are mucin-like. The cysteines at positions 282 and 330 are disulfide-linked. A helical membrane pass occupies residues M354–Y374. The Cytoplasmic portion of the chain corresponds to C375 to L394.

Homodimer. As to expression, detected in Peyer patches and mesenteric lymph nodes but not in spleen.

The protein resides in the membrane. Cell adhesion leukocyte receptor expressed by mucosal venules, helps to direct lymphocyte traffic into mucosal tissues including the Peyer patches and the intestinal lamina propria. It can bind both the integrin alpha-4/beta-7 and L-selectin, regulating both the passage and retention of leukocytes. This chain is Mucosal addressin cell adhesion molecule 1 (Madcam1), found in Rattus norvegicus (Rat).